Here is a 188-residue protein sequence, read N- to C-terminus: ATP synthase subunit b 2 (188 aa).

A disordered region spans residues 1–23 (MAEGHGDANGATAHTAADGGHKA). Positions 8–18 (ANGATAHTAAD) are enriched in low complexity. Residues 37–57 (LVSLLIAFVALYLIVSKIALP) form a helical membrane-spanning segment.

The protein belongs to the ATPase B chain family. In terms of assembly, F-type ATPases have 2 components, F(1) - the catalytic core - and F(0) - the membrane proton channel. F(1) has five subunits: alpha(3), beta(3), gamma(1), delta(1), epsilon(1). F(0) has three main subunits: a(1), b(2) and c(10-14). The alpha and beta chains form an alternating ring which encloses part of the gamma chain. F(1) is attached to F(0) by a central stalk formed by the gamma and epsilon chains, while a peripheral stalk is formed by the delta and b chains.

It localises to the cell inner membrane. Functionally, f(1)F(0) ATP synthase produces ATP from ADP in the presence of a proton or sodium gradient. F-type ATPases consist of two structural domains, F(1) containing the extramembraneous catalytic core and F(0) containing the membrane proton channel, linked together by a central stalk and a peripheral stalk. During catalysis, ATP synthesis in the catalytic domain of F(1) is coupled via a rotary mechanism of the central stalk subunits to proton translocation. Component of the F(0) channel, it forms part of the peripheral stalk, linking F(1) to F(0). The b'-subunit is a diverged and duplicated form of b found in plants and photosynthetic bacteria. The polypeptide is ATP synthase subunit b 2 (atpF2) (Rhodopseudomonas palustris (strain BisB18)).